The primary structure comprises 142 residues: Putative mating-type transcription factor (142 aa).

It localises to the nucleus. The sequence is that of Putative mating-type transcription factor from Eremothecium gossypii (strain ATCC 10895 / CBS 109.51 / FGSC 9923 / NRRL Y-1056) (Yeast).